Consider the following 111-residue polypeptide: Small ribosomal subunit protein bS16 (111 aa).

The tract at residues 92–111 (MDVKAKNRKARSSKQEAKEA) is disordered.

Belongs to the bacterial ribosomal protein bS16 family.

In Rickettsia akari (strain Hartford), this protein is Small ribosomal subunit protein bS16.